A 361-amino-acid polypeptide reads, in one-letter code: FK506-binding protein 39 kDa (361 aa).

The interval 122–256 (LVDEEDEEEE…PSSPKTRTLK (135 aa)) is disordered. The span at 123 to 174 (VDEEDEEEEESDEDYDLSPTEEDLVETVSGDEESEEESESEDNSASEEDELD) shows a compositional bias: acidic residues. At Ser-192 the chain carries Phosphoserine. The span at 208–227 (QKVEGTPVKEKKVAFAEKLE) shows a compositional bias: basic and acidic residues. Phosphothreonine is present on Thr-213. The span at 241 to 252 (QASSNAPSSPKT) shows a compositional bias: polar residues. A Phosphoserine modification is found at Ser-249. The PPIase FKBP-type domain maps to 275–361 (GKKVEMRYIG…VFEVKLVRVH (87 aa)).

This sequence belongs to the FKBP-type PPIase family. FKBP3/4 subfamily.

Its subcellular location is the nucleus. The protein localises to the nucleolus. It carries out the reaction [protein]-peptidylproline (omega=180) = [protein]-peptidylproline (omega=0). Functionally, PPIase that acts as a histone chaperone. Histone proline isomerase that increases the rate of cis-trans isomerization at prolines on the histone H3 N-terminal tail. Proline isomerization influences H3 methylation thereby regulating gene expression. In Schizosaccharomyces pombe (strain 972 / ATCC 24843) (Fission yeast), this protein is FK506-binding protein 39 kDa.